The sequence spans 87 residues: Bombyxin B-10 (87 aa).

Residues 1–19 (MKTILIFLVVISLMYSGEA) form the signal peptide. Cystine bridges form between cysteine 27-cysteine 73, cysteine 39-cysteine 86, and cysteine 72-cysteine 77. A propeptide spans 46-64 (SGAQYAPYFWTRQYLGSRG) (bombyxin B-10 C peptide).

The protein belongs to the insulin family. Heterodimer of a B chain and an A chain linked by two disulfide bonds.

Its subcellular location is the secreted. Its function is as follows. Brain peptide responsible for activation of prothoracic glands to produce ecdysone in insects. The sequence is that of Bombyxin B-10 (BBXB10) from Bombyx mori (Silk moth).